A 424-amino-acid polypeptide reads, in one-letter code: Magnesium-chelatase subunit ChlI-1, chloroplastic (424 aa).

The transit peptide at 1–60 directs the protein to the chloroplast; that stretch reads MASLLGTSSSAIWASPSLSSPSSKPSSSPICFRPGKLFGSKLNAGIQIRPKKNRSRYHVS. Valine 61 is modified (N-acetylvaline). 2 disulfide bridges follow: cysteine 102–cysteine 193 and cysteine 354–cysteine 396. Residue 119–126 participates in ATP binding; that stretch reads GDRGTGKS. At serine 355 the chain carries Phosphoserine.

Belongs to the Mg-chelatase subunits D/I family. As to quaternary structure, the magnesium chelatase complex is a heterotrimer consisting of subunits CHLI, CHLD and CHLH. Interacts with CHLH and CHLD.

The protein resides in the plastid. It localises to the chloroplast. It carries out the reaction protoporphyrin IX + Mg(2+) + ATP + H2O = Mg-protoporphyrin IX + ADP + phosphate + 3 H(+). It functions in the pathway porphyrin-containing compound metabolism; chlorophyll biosynthesis. With respect to regulation, redox regulation; active in reducing conditions, inactive in oxidizing conditions. Thioredoxins f and m mediate the reversible reductive activation of oxidized CHLI1. Its function is as follows. Involved in chlorophyll biosynthesis. Catalyzes the insertion of magnesium ion into protoporphyrin IX to yield Mg-protoporphyrin IX. The magnesium-chelatase is a complex of three subunits, CHLI, CHLD and CHLH. The reaction takes place in two steps, with an ATP-dependent activation followed by an ATP-dependent chelation step. Possesses high affinity for ATP and may play a major role in chlorophyll biosynthesis. Does not bind abscisic acid (ABA), but is a positive regulator of ABA signaling. May be involved in ABA signaling in the control of stomatal aperture, but does not seem to have an effect on ABA-induced gene expression. This chain is Magnesium-chelatase subunit ChlI-1, chloroplastic (CHLI1), found in Arabidopsis thaliana (Mouse-ear cress).